Reading from the N-terminus, the 369-residue chain is Histidinol-phosphate aminotransferase 3 (369 aa).

Lys220 carries the N6-(pyridoxal phosphate)lysine modification.

It belongs to the class-II pyridoxal-phosphate-dependent aminotransferase family. Histidinol-phosphate aminotransferase subfamily. In terms of assembly, homodimer. The cofactor is pyridoxal 5'-phosphate.

It carries out the reaction L-histidinol phosphate + 2-oxoglutarate = 3-(imidazol-4-yl)-2-oxopropyl phosphate + L-glutamate. The protein operates within amino-acid biosynthesis; L-histidine biosynthesis; L-histidine from 5-phospho-alpha-D-ribose 1-diphosphate: step 7/9. The protein is Histidinol-phosphate aminotransferase 3 (hisC3) of Mesorhizobium japonicum (strain LMG 29417 / CECT 9101 / MAFF 303099) (Mesorhizobium loti (strain MAFF 303099)).